The chain runs to 122 residues: Ribonuclease pancreatic (122 aa).

2 residues coordinate substrate: Lys-6 and Arg-9. His-11 functions as the Proton acceptor in the catalytic mechanism. 4 disulfide bridges follow: Cys-25/Cys-83, Cys-39/Cys-94, Cys-57/Cys-109, and Cys-64/Cys-71. Substrate contacts are provided by residues 40–44, Lys-65, and Arg-84; that span reads KPVNT. Catalysis depends on His-117, which acts as the Proton donor.

This sequence belongs to the pancreatic ribonuclease family. Monomer. Interacts with and forms tight 1:1 complexes with RNH1. Dimerization of two such complexes may occur. Interaction with RNH1 inhibits this protein. Pancreas.

It localises to the secreted. It carries out the reaction an [RNA] containing cytidine + H2O = an [RNA]-3'-cytidine-3'-phosphate + a 5'-hydroxy-ribonucleotide-3'-[RNA].. The catalysed reaction is an [RNA] containing uridine + H2O = an [RNA]-3'-uridine-3'-phosphate + a 5'-hydroxy-ribonucleotide-3'-[RNA].. Functionally, endonuclease that catalyzes the cleavage of RNA on the 3' side of pyrimidine nucleotides. Acts on single-stranded and double-stranded RNA. This Notamacropus rufogriseus (Red-necked wallaby) protein is Ribonuclease pancreatic.